The primary structure comprises 300 residues: Platelet-derived growth factor D (300 aa).

Residues 1–114 form the CUB domain; sequence QVTGNGHVQS…PGFKIYYSFV (114 aa). C53 and C75 form a disulfide bridge. N220 is a glycosylation site (N-linked (GlcNAc...) asparagine).

The protein belongs to the PDGF/VEGF growth factor family. Homodimer; disulfide-linked. Interacts with PDGFRB homodimers, and with heterodimers formed by PDGFRA and PDGFRB. In terms of processing, activated by proteolytic cleavage. Proteolytic removal of the N-terminal CUB domain releasing the core domain is necessary for unmasking the receptor-binding epitopes of the core domain. Cleavage after Arg-191 or Arg-193 by urokinase plasminogen activator gives rise to the active form.

The protein localises to the secreted. In terms of biological role, growth factor that plays an essential role in the regulation of embryonic development, cell proliferation, cell migration, survival and chemotaxis. Potent mitogen for cells of mesenchymal origin. Plays an important role in wound healing. Induces macrophage recruitment, increased interstitial pressure, and blood vessel maturation during angiogenesis. Can initiate events that lead to a mesangial proliferative glomerulonephritis, including influx of monocytes and macrophages and production of extracellular matrix. This Oryctolagus cuniculus (Rabbit) protein is Platelet-derived growth factor D (PDGFD).